Reading from the N-terminus, the 487-residue chain is N-succinylglutamate 5-semialdehyde dehydrogenase (487 aa).

221–226 lines the NAD(+) pocket; that stretch reads GSSRTG. Catalysis depends on residues Glu244 and Cys278.

It belongs to the aldehyde dehydrogenase family. AstD subfamily.

It catalyses the reaction N-succinyl-L-glutamate 5-semialdehyde + NAD(+) + H2O = N-succinyl-L-glutamate + NADH + 2 H(+). It functions in the pathway amino-acid degradation; L-arginine degradation via AST pathway; L-glutamate and succinate from L-arginine: step 4/5. Its function is as follows. Catalyzes the NAD-dependent reduction of succinylglutamate semialdehyde into succinylglutamate. The sequence is that of N-succinylglutamate 5-semialdehyde dehydrogenase from Pseudomonas putida (strain W619).